A 337-amino-acid polypeptide reads, in one-letter code: Phenylalanine--tRNA ligase alpha subunit (337 aa).

Glu258 contributes to the Mg(2+) binding site.

It belongs to the class-II aminoacyl-tRNA synthetase family. Phe-tRNA synthetase alpha subunit type 1 subfamily. Tetramer of two alpha and two beta subunits. It depends on Mg(2+) as a cofactor.

The protein localises to the cytoplasm. It catalyses the reaction tRNA(Phe) + L-phenylalanine + ATP = L-phenylalanyl-tRNA(Phe) + AMP + diphosphate + H(+). The sequence is that of Phenylalanine--tRNA ligase alpha subunit from Burkholderia thailandensis (strain ATCC 700388 / DSM 13276 / CCUG 48851 / CIP 106301 / E264).